The sequence spans 135 residues: Protein NrdI (135 aa).

The protein belongs to the NrdI family.

In terms of biological role, probably involved in ribonucleotide reductase function. This Salmonella gallinarum (strain 287/91 / NCTC 13346) protein is Protein NrdI.